Reading from the N-terminus, the 463-residue chain is Retinoic acid receptor RXR-gamma (463 aa).

The segment at 1–138 (MYGNYSHFMK…TSPGSLVKHI (138 aa)) is modulating. Positions 17–53 (GSPGHSGSTSMSPSAALSTGKPMDSHPSYTDTPVSAP) are disordered. Residues 21–33 (HSGSTSMSPSAAL) are compositionally biased toward polar residues. NR C4-type zinc fingers lie at residues 139-159 (CAIC…CEGC) and 175-199 (CRDN…YQKC). The segment at residues 139 to 204 (CAICGDRSSG…RYQKCLVMGM (66 aa)) is a DNA-binding region (nuclear receptor). The hinge stretch occupies residues 205–230 (KREAVQEERQRSRERAESEAECASSG). A compositionally biased stretch (basic and acidic residues) spans 211–222 (EERQRSRERAES). The segment at 211–232 (EERQRSRERAESEAECASSGHE) is disordered. The 229-residue stretch at 231–459 (HEDMPVERIL…TFLMEMLETP (229 aa)) folds into the NR LBD domain.

It belongs to the nuclear hormone receptor family. NR2 subfamily. Homodimer. Heterodimer with a RAR molecule. Binds DNA preferentially as a RAR/RXR heterodimer. Interacts with RARA. In terms of processing, acetylated by EP300.

Its subcellular location is the nucleus. The protein resides in the cytoplasm. Functionally, receptor for retinoic acid. Retinoic acid receptors bind as heterodimers to their target response elements in response to their ligands, all-trans or 9-cis retinoic acid, and regulate gene expression in various biological processes. The RAR/RXR heterodimers bind to the retinoic acid response elements (RARE) composed of tandem 5'-AGGTCA-3' sites known as DR1-DR5. The high affinity ligand for RXRs is 9-cis retinoic acid. The sequence is that of Retinoic acid receptor RXR-gamma (RXRG) from Sus scrofa (Pig).